A 105-amino-acid chain; its full sequence is Small ribosomal subunit protein uS10 (105 aa).

It belongs to the universal ribosomal protein uS10 family. In terms of assembly, part of the 30S ribosomal subunit.

Involved in the binding of tRNA to the ribosomes. This Oleidesulfovibrio alaskensis (strain ATCC BAA-1058 / DSM 17464 / G20) (Desulfovibrio alaskensis) protein is Small ribosomal subunit protein uS10.